The sequence spans 196 residues: Probable GTP-binding protein EngB (196 aa).

The 175-residue stretch at 22–196 (NLPEIALAGR…GNWIEDKISQ (175 aa)) folds into the EngB-type G domain. Residues 30-37 (GRSNVGKS), 57-61 (GKTQT), 75-78 (DVPG), 142-145 (TKMD), and 175-177 (FSS) each bind GTP. Ser37 and Thr59 together coordinate Mg(2+).

Belongs to the TRAFAC class TrmE-Era-EngA-EngB-Septin-like GTPase superfamily. EngB GTPase family. Mg(2+) is required as a cofactor.

Its function is as follows. Necessary for normal cell division and for the maintenance of normal septation. In Lactobacillus acidophilus (strain ATCC 700396 / NCK56 / N2 / NCFM), this protein is Probable GTP-binding protein EngB.